The chain runs to 382 residues: Draxin-A (382 aa).

Positions 1–22 (MMSSSWCLPLALLFSTLAVSHS) are cleaved as a signal peptide. 3 disordered regions span residues 28-213 (THAK…PPSP), 233-252 (LPTL…GKMQ), and 275-297 (VDAW…SGNV). Residues 73–82 (RGAKASSGAG) show a composition bias toward low complexity. Residues 139 to 149 (GPRKGRGQGHG) are compositionally biased toward basic residues. The segment covering 190-201 (SVSSAAAATSPS) has biased composition (low complexity). A compositionally biased stretch (basic residues) spans 281-290 (SRKKDKRRSK). Asparagine 291 and asparagine 296 each carry an N-linked (GlcNAc...) asparagine glycan.

Belongs to the draxin family.

The protein resides in the secreted. In terms of biological role, chemorepulsive axon guidance protein required for the development of spinal cord and forebrain commissures. Acts as a chemorepulsive guidance protein for commissural axons during development. Able to inhibit or repel neurite outgrowth from dorsal spinal cord. The polypeptide is Draxin-A (draxin-A) (Salmo salar (Atlantic salmon)).